The following is a 385-amino-acid chain: Homoserine O-succinyltransferase (385 aa).

The 311-residue stretch at 45–355 (NAVLVCHALN…SHGHDAFLLD (311 aa)) folds into the AB hydrolase-1 domain. Residue Ser-151 is the Nucleophile of the active site. Residue Arg-221 participates in substrate binding. Catalysis depends on residues Asp-316 and His-349. Asp-350 contributes to the substrate binding site.

The protein belongs to the AB hydrolase superfamily. MetX family. Homodimer.

The protein localises to the cytoplasm. The enzyme catalyses L-homoserine + succinyl-CoA = O-succinyl-L-homoserine + CoA. It participates in amino-acid biosynthesis; L-methionine biosynthesis via de novo pathway; O-succinyl-L-homoserine from L-homoserine: step 1/1. Functionally, transfers a succinyl group from succinyl-CoA to L-homoserine, forming succinyl-L-homoserine. This chain is Homoserine O-succinyltransferase, found in Herminiimonas arsenicoxydans.